Here is a 468-residue protein sequence, read N- to C-terminus: Siroheme synthase (468 aa).

A precorrin-2 dehydrogenase /sirohydrochlorin ferrochelatase region spans residues 1 to 202 (MDYLPLFARL…EQHDSAEQWM (202 aa)). NAD(+)-binding positions include 22-23 (DI) and 43-44 (PS). Ser126 is subject to Phosphoserine. The uroporphyrinogen-III C-methyltransferase stretch occupies residues 214–468 (GEIVLVGAGP…SGKEHLINLA (255 aa)). Pro223 serves as a coordination point for S-adenosyl-L-methionine. Asp246 functions as the Proton acceptor in the catalytic mechanism. Residue Lys268 is the Proton donor of the active site. Residues 299–301 (GGD), 329–330 (TA), Met381, and Gly410 contribute to the S-adenosyl-L-methionine site.

The protein in the N-terminal section; belongs to the precorrin-2 dehydrogenase / sirohydrochlorin ferrochelatase family. This sequence in the C-terminal section; belongs to the precorrin methyltransferase family.

The catalysed reaction is uroporphyrinogen III + 2 S-adenosyl-L-methionine = precorrin-2 + 2 S-adenosyl-L-homocysteine + H(+). It catalyses the reaction precorrin-2 + NAD(+) = sirohydrochlorin + NADH + 2 H(+). It carries out the reaction siroheme + 2 H(+) = sirohydrochlorin + Fe(2+). Its pathway is cofactor biosynthesis; adenosylcobalamin biosynthesis; precorrin-2 from uroporphyrinogen III: step 1/1. The protein operates within cofactor biosynthesis; adenosylcobalamin biosynthesis; sirohydrochlorin from precorrin-2: step 1/1. It participates in porphyrin-containing compound metabolism; siroheme biosynthesis; precorrin-2 from uroporphyrinogen III: step 1/1. It functions in the pathway porphyrin-containing compound metabolism; siroheme biosynthesis; siroheme from sirohydrochlorin: step 1/1. Its pathway is porphyrin-containing compound metabolism; siroheme biosynthesis; sirohydrochlorin from precorrin-2: step 1/1. Its function is as follows. Multifunctional enzyme that catalyzes the SAM-dependent methylations of uroporphyrinogen III at position C-2 and C-7 to form precorrin-2 via precorrin-1. Then it catalyzes the NAD-dependent ring dehydrogenation of precorrin-2 to yield sirohydrochlorin. Finally, it catalyzes the ferrochelation of sirohydrochlorin to yield siroheme. The protein is Siroheme synthase of Tolumonas auensis (strain DSM 9187 / NBRC 110442 / TA 4).